A 426-amino-acid polypeptide reads, in one-letter code: D-tagatose-1,6-bisphosphate aldolase subunit KbaZ (426 aa).

This sequence belongs to the GatZ/KbaZ family. KbaZ subfamily. As to quaternary structure, forms a complex with KbaY.

It participates in carbohydrate metabolism; D-tagatose 6-phosphate degradation; D-glyceraldehyde 3-phosphate and glycerone phosphate from D-tagatose 6-phosphate: step 2/2. In terms of biological role, component of the tagatose-1,6-bisphosphate aldolase KbaYZ that is required for full activity and stability of the Y subunit. Could have a chaperone-like function for the proper and stable folding of KbaY. When expressed alone, KbaZ does not show any aldolase activity. The sequence is that of D-tagatose-1,6-bisphosphate aldolase subunit KbaZ from Escherichia coli O17:K52:H18 (strain UMN026 / ExPEC).